Consider the following 1260-residue polypeptide: Paraclostridial mosquitocidal protein 1 (1260 aa).

H208 is a binding site for Zn(2+). Residue E209 is the Proton acceptor of the active site. Positions 212 and 248 each coordinate Zn(2+). C395 and C406 are oxidised to a cystine. The interval 401 to 824 (NRVNICIDVN…NIQSIPDFDI (424 aa)) is translocation domain (TD). Residues 825 to 1065 (NALIDRLGIQ…SYFNSNILRD (241 aa)) are HCN. The HCC stretch occupies residues 1066 to 1260 (FWGEPLEYNK…FVSEDEGWKE (195 aa)).

It belongs to the peptidase M27 family. The cofactor is Zn(2+).

It carries out the reaction Limited hydrolysis of proteins of the neuroexocytosis apparatus, synaptobrevins, SNAP25 or syntaxin. No detected action on small molecule substrates.. Preincubation with the metalloprotease inhibitor 1,10-phenanthroline before injection into Anopheles or Aedes decreases toxicity. Its function is as follows. Neurotoxin active against Anopheles but not Aedes mosquitoes upon oral ingestion; expression of the ptox operon (ntnh-orfX1-orfX2-orfX3-pmp1) in B.thuringiensis kills Anopheles but not Aedes mosquito 3rd instar larvae. The ntnh-pmp1 construct is about half as toxic. PMP1 is toxic when injected directly into Anopheles or Aedes mosquito 3rd instar larvae, larvae no longer move, suggesting they are paralyzed. Adult mosquitoes (Anopheles or Aedes) and Drosophila lose the ability to fly in a dose-dependent manner by 24 hours after injection with 100 pg neurotoxin. Not toxic upon injection in mice. Functionally, neurotoxin that cleaves A.gambiae syntaxin 1a, probably hydrolyzing the '240-Glu-|-His-241' bond. Does not cleave A.gambiae n-synaptobrevin or SNAP-25, nor human syntaxin 1A. Responsible for host epithelial cell transcytosis, host nerve cell targeting and translocation of PMP1 light chain (LC) into host cytosol. Composed of 3 subdomains; the translocation domain (TD), and N-terminus and C-terminus of the receptor-binding domain (RBD), called HCN and HCC. This is Paraclostridial mosquitocidal protein 1 from Paraclostridium bifermentans (Clostridium bifermentans).